Here is a 92-residue protein sequence, read N- to C-terminus: DNA-directed RNA polymerase subunit Rpo11 (92 aa).

It belongs to the archaeal Rpo11/eukaryotic RPB11/RPC19 RNA polymerase subunit family. As to quaternary structure, part of the RNA polymerase complex.

Its subcellular location is the cytoplasm. The catalysed reaction is RNA(n) + a ribonucleoside 5'-triphosphate = RNA(n+1) + diphosphate. Functionally, DNA-dependent RNA polymerase (RNAP) catalyzes the transcription of DNA into RNA using the four ribonucleoside triphosphates as substrates. In Saccharolobus islandicus (strain Y.N.15.51 / Yellowstone #2) (Sulfolobus islandicus), this protein is DNA-directed RNA polymerase subunit Rpo11.